Here is a 104-residue protein sequence, read N- to C-terminus: Large ribosomal subunit protein bL21 (104 aa).

The protein belongs to the bacterial ribosomal protein bL21 family. As to quaternary structure, part of the 50S ribosomal subunit. Contacts protein L20.

Functionally, this protein binds to 23S rRNA in the presence of protein L20. The chain is Large ribosomal subunit protein bL21 from Leptospira interrogans serogroup Icterohaemorrhagiae serovar copenhageni (strain Fiocruz L1-130).